A 353-amino-acid chain; its full sequence is MSKGIVALAMSGGVDSSVSAYILKERGYEVIGIYMDLWRDEREEYCNKSAAEDARRVAEKLDIPFHIINIGKEFKANVIDYFIDEYLSGRTPNPCVACNKTIKFEAFFNAAKEFGADFMATGHYCKIEERNRRKVIVKAEDDKKDQTYMMYNLKQYQLERTIMPCGEYRKEHIREIAENIGLDVYNKKDSQEICFIPDNDHGGFIKRNYKSKVSEGNFVDKAGKIIGKHKGIIYYTIGQRKGLGIALGKPAYVIDINPITNEVVIGDEEDIFHTELIAKDVNFIPFDKLEKSMELEAKVRYSAKPSKATIIPLGNNKVKVVFQNKQRAITKGQSVVLYDKDMLVGGGIIEEIV.

ATP is bound by residues 9-16 (AMSGGVDS) and Met35. The active-site Nucleophile is the Cys98. Cysteines 98 and 194 form a disulfide. An ATP-binding site is contributed by Gly122. The segment at 144 to 146 (KDQ) is interaction with tRNA. Cys194 functions as the Cysteine persulfide intermediate in the catalytic mechanism. The segment at 300–301 (RY) is interaction with tRNA.

Belongs to the MnmA/TRMU family.

It is found in the cytoplasm. The catalysed reaction is S-sulfanyl-L-cysteinyl-[protein] + uridine(34) in tRNA + AH2 + ATP = 2-thiouridine(34) in tRNA + L-cysteinyl-[protein] + A + AMP + diphosphate + H(+). Its function is as follows. Catalyzes the 2-thiolation of uridine at the wobble position (U34) of tRNA, leading to the formation of s(2)U34. The polypeptide is tRNA-specific 2-thiouridylase MnmA 2 (Clostridium botulinum (strain Loch Maree / Type A3)).